The primary structure comprises 144 residues: Transcription antitermination protein NusB (144 aa).

It belongs to the NusB family.

Involved in transcription antitermination. Required for transcription of ribosomal RNA (rRNA) genes. Binds specifically to the boxA antiterminator sequence of the ribosomal RNA (rrn) operons. The protein is Transcription antitermination protein NusB of Pasteurella multocida (strain Pm70).